The sequence spans 373 residues: Anhydro-N-acetylmuramic acid kinase (373 aa).

13 to 20 (GTSMDGID) lines the ATP pocket.

The protein belongs to the anhydro-N-acetylmuramic acid kinase family.

It carries out the reaction 1,6-anhydro-N-acetyl-beta-muramate + ATP + H2O = N-acetyl-D-muramate 6-phosphate + ADP + H(+). It functions in the pathway amino-sugar metabolism; 1,6-anhydro-N-acetylmuramate degradation. Its pathway is cell wall biogenesis; peptidoglycan recycling. In terms of biological role, catalyzes the specific phosphorylation of 1,6-anhydro-N-acetylmuramic acid (anhMurNAc) with the simultaneous cleavage of the 1,6-anhydro ring, generating MurNAc-6-P. Is required for the utilization of anhMurNAc either imported from the medium or derived from its own cell wall murein, and thus plays a role in cell wall recycling. The polypeptide is Anhydro-N-acetylmuramic acid kinase (Brucella suis (strain ATCC 23445 / NCTC 10510)).